A 362-amino-acid chain; its full sequence is Putative glutamate--cysteine ligase 2-1 (362 aa).

It belongs to the glutamate--cysteine ligase type 2 family. YbdK subfamily.

It catalyses the reaction L-cysteine + L-glutamate + ATP = gamma-L-glutamyl-L-cysteine + ADP + phosphate + H(+). Functionally, ATP-dependent carboxylate-amine ligase which exhibits weak glutamate--cysteine ligase activity. This chain is Putative glutamate--cysteine ligase 2-1, found in Streptomyces avermitilis (strain ATCC 31267 / DSM 46492 / JCM 5070 / NBRC 14893 / NCIMB 12804 / NRRL 8165 / MA-4680).